The chain runs to 309 residues: RuBisCO operon transcriptional regulator (309 aa).

The HTH lysR-type domain maps to 6–63 (ATLHQLKIFAAVARHMSFARAAEELHLTPPALSIQVRQLAEAVGQPLFDQIGKKIYLT). The segment at residues 23-42 (FARAAEELHLTPPALSIQVR) is a DNA-binding region (H-T-H motif).

It belongs to the LysR transcriptional regulatory family.

Trans-acting transcriptional regulator of RuBisCO genes (rbcL1S1) expression. The polypeptide is RuBisCO operon transcriptional regulator (rbcR) (Acidithiobacillus ferrooxidans (Thiobacillus ferrooxidans)).